A 126-amino-acid chain; its full sequence is MARIAGVDLPRDKRVEVALTYVYGIGRSRAAETLANTGVNPDTRVYQLTEEELVKLREWIDANYKVEGDLRREVAADIRRKIEIGCYQGIRHRRGLPVRGQRTQTNARTRKGKKKTVAGKKKAGRK.

A disordered region spans residues 95-126 (GLPVRGQRTQTNARTRKGKKKTVAGKKKAGRK). Positions 108–126 (RTRKGKKKTVAGKKKAGRK) are enriched in basic residues.

It belongs to the universal ribosomal protein uS13 family. As to quaternary structure, part of the 30S ribosomal subunit. Forms a loose heterodimer with protein S19. Forms two bridges to the 50S subunit in the 70S ribosome.

In terms of biological role, located at the top of the head of the 30S subunit, it contacts several helices of the 16S rRNA. In the 70S ribosome it contacts the 23S rRNA (bridge B1a) and protein L5 of the 50S subunit (bridge B1b), connecting the 2 subunits; these bridges are implicated in subunit movement. Contacts the tRNAs in the A and P-sites. The protein is Small ribosomal subunit protein uS13 of Thermobifida fusca (strain YX).